Here is a 223-residue protein sequence, read N- to C-terminus: 7-cyano-7-deazaguanine synthase (223 aa).

8 to 18 (MSGGMDSTLCA) provides a ligand contact to ATP. Residues Cys187, Cys195, Cys198, and Cys201 each coordinate Zn(2+).

This sequence belongs to the QueC family. The cofactor is Zn(2+).

The catalysed reaction is 7-carboxy-7-deazaguanine + NH4(+) + ATP = 7-cyano-7-deazaguanine + ADP + phosphate + H2O + H(+). Its pathway is purine metabolism; 7-cyano-7-deazaguanine biosynthesis. Catalyzes the ATP-dependent conversion of 7-carboxy-7-deazaguanine (CDG) to 7-cyano-7-deazaguanine (preQ(0)). This Campylobacter curvus (strain 525.92) protein is 7-cyano-7-deazaguanine synthase.